A 218-amino-acid chain; its full sequence is Large ribosomal subunit protein bL25 (218 aa).

This sequence belongs to the bacterial ribosomal protein bL25 family. CTC subfamily. Part of the 50S ribosomal subunit; part of the 5S rRNA/L5/L18/L25 subcomplex. Contacts the 5S rRNA. Binds to the 5S rRNA independently of L5 and L18.

Functionally, this is one of the proteins that binds to the 5S RNA in the ribosome where it forms part of the central protuberance. The chain is Large ribosomal subunit protein bL25 from Polaromonas naphthalenivorans (strain CJ2).